The following is a 409-amino-acid chain: Failed axon connections homolog (409 aa).

A helical membrane pass occupies residues 68 to 88 (YLTGGALLAAAAYLLHELLVI). Residues 372–409 (DEGAENSFSRTPDTDFTGHSLFDSDVDMDDYTEHEQCK) form a disordered region.

Belongs to the FAX family.

Its subcellular location is the membrane. May play a role in axonal development. The sequence is that of Failed axon connections homolog (Faxc) from Rattus norvegicus (Rat).